The primary structure comprises 247 residues: MSVPPPPKEDLIKPNPPKSESAVSGFNWWRRTFQYKTGLGLTPEEETQYENDYKFVLQRKQCSKCYEYRDWLLNYSPTVIFMTQQIAKLNNKNTNADVFKFDESKIICDVCPDWKSGGFHPDLGILICQNRIKDKWHLEDTLAHELVHYFDNLKWEVDWLNLRHHACSEIRASSLSGECRFFQEFARRGFNTGFKVDRGHQACVKRRAAISVSGNPNCRDKEHAERVVDEVWDSCFNDTRPFDEIYR.

Residues 1-21 (MSVPPPPKEDLIKPNPPKSES) form a disordered region. His-144 lines the a divalent metal cation pocket. Glu-145 is a catalytic residue. A divalent metal cation is bound at residue His-148.

The protein belongs to the peptidase M76 family.

Its subcellular location is the mitochondrion inner membrane. Its function is as follows. Has a dual role in the assembly of mitochondrial ATPase. Acts as a protease that removes N-terminal residues of mitochondrial ATPase CF(0) subunit 6 at the intermembrane space side. Also involved in the correct assembly of the membrane-embedded ATPase CF(0) particle, probably mediating association of subunit 6 with the subunit 9 ring. The sequence is that of Mitochondrial inner membrane protease ATP23 (ATP23) from Kluyveromyces lactis (strain ATCC 8585 / CBS 2359 / DSM 70799 / NBRC 1267 / NRRL Y-1140 / WM37) (Yeast).